The following is a 256-amino-acid chain: Thiazole synthase (256 aa).

Residue Lys99 is the Schiff-base intermediate with DXP of the active site. 1-deoxy-D-xylulose 5-phosphate-binding positions include Gly160, 186–187, and 208–209; these read AG and NT.

The protein belongs to the ThiG family. Homotetramer. Forms heterodimers with either ThiH or ThiS.

Its subcellular location is the cytoplasm. The catalysed reaction is [ThiS sulfur-carrier protein]-C-terminal-Gly-aminoethanethioate + 2-iminoacetate + 1-deoxy-D-xylulose 5-phosphate = [ThiS sulfur-carrier protein]-C-terminal Gly-Gly + 2-[(2R,5Z)-2-carboxy-4-methylthiazol-5(2H)-ylidene]ethyl phosphate + 2 H2O + H(+). It functions in the pathway cofactor biosynthesis; thiamine diphosphate biosynthesis. In terms of biological role, catalyzes the rearrangement of 1-deoxy-D-xylulose 5-phosphate (DXP) to produce the thiazole phosphate moiety of thiamine. Sulfur is provided by the thiocarboxylate moiety of the carrier protein ThiS. In vitro, sulfur can be provided by H(2)S. This chain is Thiazole synthase, found in Neorickettsia sennetsu (strain ATCC VR-367 / Miyayama) (Ehrlichia sennetsu).